Reading from the N-terminus, the 357-residue chain is MQLSDFSFDLPKSLISFHPYFIRSTCRLMVMYGHTGMIFHKRFFNIIDEINSGDLIILNNTQVIPARFFGKKESGGKVEVLVEKILGINNILASIKNSKNINIGSKIFFGYKDKIKGSVVDCKNSFFEIFFHDNIDSAIDIINNIGEIPLPPYIKRFRNKLDVDLYQTVYKKKTGSIAAPTAGLHFDLPLLEALHNKGVDIDYITLHIGSGTFQPIRRVQIEEHIMHSESVEVSSSVIQKIKSCKKKGGRIIAVGTSTLRALESAYHSSEWSDSKDFISDTNIFIYPGYKHNIVDALITNFHFPESTLIMLVCSFLGYKNTMNAYNTAIVNKYSFFSYGDAMYITHNKLAPYENFII.

It belongs to the QueA family. As to quaternary structure, monomer.

The protein resides in the cytoplasm. It carries out the reaction 7-aminomethyl-7-carbaguanosine(34) in tRNA + S-adenosyl-L-methionine = epoxyqueuosine(34) in tRNA + adenine + L-methionine + 2 H(+). The protein operates within tRNA modification; tRNA-queuosine biosynthesis. Functionally, transfers and isomerizes the ribose moiety from AdoMet to the 7-aminomethyl group of 7-deazaguanine (preQ1-tRNA) to give epoxyqueuosine (oQ-tRNA). The chain is S-adenosylmethionine:tRNA ribosyltransferase-isomerase from Buchnera aphidicola subsp. Acyrthosiphon pisum (strain Tuc7).